We begin with the raw amino-acid sequence, 25 residues long: Repetitive proline-rich cell wall protein (25 aa).

Residues 1–25 (NYDKPPVEKPPVYKPPVEKPPVYKP) are disordered. Repeat copies occupy residues 5 to 9 (PPVEK), 10 to 14 (PPVYK), 15 to 19 (PPVEK), and 20 to 24 (PPVYK). The tract at residues 5–24 (PPVEKPPVYKPPVEKPPVYK) is 4 X 5 AA tandem repeats of P-P-V-[EY]-K. A 4-hydroxyproline mark is found at Pro6, Pro11, Pro16, and Pro21. Residues 8–25 (EKPPVYKPPVEKPPVYKP) show a composition bias toward pro residues.

It belongs to the plant proline-rich protein superfamily. ENOD12 family.

It is found in the secreted. Its subcellular location is the cell wall. This Phaseolus vulgaris (Kidney bean) protein is Repetitive proline-rich cell wall protein.